Consider the following 620-residue polypeptide: Translocator protein BipB (620 aa).

Residues Q58–R95 form a disordered region. Positions H66–A84 are enriched in basic and acidic residues. The stretch at E309 to M339 forms a coiled coil. The next 3 helical transmembrane spans lie at F355–L375, A401–C421, and L430–V450.

Belongs to the SctE/SipB/YopB family.

The protein localises to the secreted. The protein resides in the host membrane. Plays a role in the bacterium-induced formation of multinucleated giant cell (MNGC), which is formed after host cell fusion, as well as in the intercellular spreading of bacteria and in the induction of apoptosis in macrophages. May act in concert with other effector proteins to induce fusion of host cell membranes. The protein is Translocator protein BipB (bipB) of Burkholderia pseudomallei (strain 1106a).